The chain runs to 440 residues: Beta-1,3-galactosyl-O-glycosyl-glycoprotein beta-1,6-N-acetylglucosaminyltransferase 3 (440 aa).

At 1-12 (MKMTGWKKKLCR) the chain is on the cytoplasmic side. Residues 13–30 (GHHLWALGCYMLLAVVAL) traverse the membrane as a helical; Signal-anchor for type II membrane protein segment. Over 31-440 (RLSLRLKCDV…RHKAIYGTEL (410 aa)) the chain is Lumenal. 2 N-linked (GlcNAc...) asparagine glycosylation sites follow: Asn72 and Asn108. Disulfide bonds link Cys73-Cys230, Cys164-Cys384, Cys185-Cys212, and Cys393-Cys425.

Belongs to the glycosyltransferase 14 family. Post-translationally, N-glycosylated. As to expression, primarily expressed in mucus-secreting tissues.

The protein localises to the golgi apparatus membrane. The catalysed reaction is a 3-O-[beta-D-galactosyl-(1-&gt;3)-N-acetyl-alpha-D-galactosaminyl]-L-seryl-[protein] + UDP-N-acetyl-alpha-D-glucosamine = 3-O-{beta-D-galactosyl-(1-&gt;3)-[N-acetyl-beta-D-glucosaminyl-(1-&gt;6)]-N-acetyl-alpha-D-galactosaminyl}-L-seryl-[protein] + UDP + H(+). It carries out the reaction a 3-O-[beta-D-galactosyl-(1-&gt;3)-N-acetyl-alpha-D-galactosaminyl]-L-threonyl-[protein] + UDP-N-acetyl-alpha-D-glucosamine = a 3-O-{beta-D-galactosyl-(1-&gt;3)-[N-acetyl-beta-D-glucosaminyl-(1-&gt;6)]-N-acetyl-alpha-D-galactosaminyl}-L-threonyl-[protein] + UDP + H(+). The enzyme catalyses a beta-D-Gal-(1-&gt;4)-beta-D-GlcNAc-(1-&gt;3)-beta-D-Gal-(1-&gt;4)-beta-D-GlcNAc derivative + UDP-N-acetyl-alpha-D-glucosamine = a beta-D-Gal-(1-&gt;4)-beta-D-GlcNAc-(1-&gt;3)-[beta-D-GlcNAc-(1-&gt;6)]-beta-D-Gal-(1-&gt;4)-N-acetyl-beta-D-glucosaminyl derivative + UDP + H(+). It catalyses the reaction 3-O-[N-acetyl-beta-D-glucosaminyl-(1-&gt;3)-N-acetyl-alpha-D-galactosaminyl]-L-seryl-[protein] + UDP-N-acetyl-alpha-D-glucosamine = 3-O-[N-acetyl-beta-D-glucosaminyl-(1-&gt;3)-[N-acetyl-beta-D-glucosaminyl-(1-&gt;6)]-N-acetyl-alpha-D-galactosaminyl]-L-seryl-[protein] + UDP + H(+). The catalysed reaction is a 3-O-[N-acetyl-beta-D-glucosaminyl-(1-&gt;3)-N-acetyl-alpha-D-galactosaminyl]-L-threonyl-[protein] + UDP-N-acetyl-alpha-D-glucosamine = 3-O-[N-acetyl-beta-D-glucosaminyl-(1-&gt;3)-[N-acetyl-beta-D-glucosaminyl-(1-&gt;6)]-N-acetyl-alpha-D-galactosaminyl]-L-threonyl-[protein] + UDP + H(+). The protein operates within protein modification; protein glycosylation. Glycosyltransferase that can synthesize all known mucin beta 6 N-acetylglucosaminides. Mediates core 2 and core 4 O-glycan branching, 2 important steps in mucin-type biosynthesis. Also has I-branching enzyme activity by converting linear into branched poly-N-acetyllactosaminoglycans, leading to introduce the blood group I antigen during embryonic development. This Bos taurus (Bovine) protein is Beta-1,3-galactosyl-O-glycosyl-glycoprotein beta-1,6-N-acetylglucosaminyltransferase 3 (GCNT3).